We begin with the raw amino-acid sequence, 124 residues long: Membrane-anchored ubiquitin-fold protein 2 (124 aa).

Residues leucine 8–cysteine 74 form the Ubiquitin-like domain. 4 S-palmitoyl cysteine lipidation sites follow: cysteine 115, cysteine 117, cysteine 119, and cysteine 124.

Acylated protein. Probably modified with palmitate. Ubiquitous, but three fold higher expression in stamens.

It is found in the cell membrane. In terms of biological role, may serve as docking site to facilitate the association of other proteins to the plasma membrane. The chain is Membrane-anchored ubiquitin-fold protein 2 (MUB2) from Arabidopsis thaliana (Mouse-ear cress).